The chain runs to 120 residues: NAD(P)H-quinone oxidoreductase subunit 3 (120 aa).

The next 3 membrane-spanning stretches (helical) occupy residues 2–22 (FVLT…LVPV), 64–84 (MFAL…PWAV), and 89–109 (LGLL…VALV).

Belongs to the complex I subunit 3 family. NDH-1 can be composed of about 15 different subunits; different subcomplexes with different compositions have been identified which probably have different functions.

It localises to the cellular thylakoid membrane. The enzyme catalyses a plastoquinone + NADH + (n+1) H(+)(in) = a plastoquinol + NAD(+) + n H(+)(out). It carries out the reaction a plastoquinone + NADPH + (n+1) H(+)(in) = a plastoquinol + NADP(+) + n H(+)(out). Its function is as follows. NDH-1 shuttles electrons from an unknown electron donor, via FMN and iron-sulfur (Fe-S) centers, to quinones in the respiratory and/or the photosynthetic chain. The immediate electron acceptor for the enzyme in this species is believed to be plastoquinone. Couples the redox reaction to proton translocation, and thus conserves the redox energy in a proton gradient. Cyanobacterial NDH-1 also plays a role in inorganic carbon-concentration. The protein is NAD(P)H-quinone oxidoreductase subunit 3 (ndhC) of Synechocystis sp. (strain ATCC 27184 / PCC 6803 / Kazusa).